A 741-amino-acid polypeptide reads, in one-letter code: NAD(P)H-quinone oxidoreductase subunit 5, chloroplastic (741 aa).

Transmembrane regions (helical) follow at residues W9–F29, W40–I60, I89–I109, F125–I145, I147–A167, G185–F205, N219–A239, T258–A278, L280–I300, L327–I347, T396–S416, W425–Y445, L547–F567, I606–V626, and S721–I741.

Belongs to the complex I subunit 5 family. As to quaternary structure, NDH is composed of at least 16 different subunits, 5 of which are encoded in the nucleus.

It is found in the plastid. The protein resides in the chloroplast thylakoid membrane. The enzyme catalyses a plastoquinone + NADH + (n+1) H(+)(in) = a plastoquinol + NAD(+) + n H(+)(out). It catalyses the reaction a plastoquinone + NADPH + (n+1) H(+)(in) = a plastoquinol + NADP(+) + n H(+)(out). Its function is as follows. NDH shuttles electrons from NAD(P)H:plastoquinone, via FMN and iron-sulfur (Fe-S) centers, to quinones in the photosynthetic chain and possibly in a chloroplast respiratory chain. The immediate electron acceptor for the enzyme in this species is believed to be plastoquinone. Couples the redox reaction to proton translocation, and thus conserves the redox energy in a proton gradient. This chain is NAD(P)H-quinone oxidoreductase subunit 5, chloroplastic (ndhF), found in Ceratophyllum demersum (Rigid hornwort).